The primary structure comprises 77 residues: DNA-directed RNA polymerase subunit Rpo5 (77 aa).

It belongs to the archaeal Rpo5/eukaryotic RPB5 RNA polymerase subunit family. Part of the RNA polymerase complex.

It is found in the cytoplasm. The enzyme catalyses RNA(n) + a ribonucleoside 5'-triphosphate = RNA(n+1) + diphosphate. Its function is as follows. DNA-dependent RNA polymerase (RNAP) catalyzes the transcription of DNA into RNA using the four ribonucleoside triphosphates as substrates. The chain is DNA-directed RNA polymerase subunit Rpo5 from Methanothermobacter thermautotrophicus (strain ATCC 29096 / DSM 1053 / JCM 10044 / NBRC 100330 / Delta H) (Methanobacterium thermoautotrophicum).